The chain runs to 162 residues: MATLQSLADLGQANKAALATADTEAPVHVQKLDAQGRAYATGKRKDAVARVWIKPGAGTITVNDRPVDTYFARPVLRMILQQPLHVANRVDQYDIVVTVTGGGLSGQAGAVRHGLARALTYYEPELRSPLKREGFLTRDPRVVERKKYGRKKARRSFQFSKR.

This sequence belongs to the universal ribosomal protein uS9 family.

In Methylobacterium nodulans (strain LMG 21967 / CNCM I-2342 / ORS 2060), this protein is Small ribosomal subunit protein uS9.